Reading from the N-terminus, the 283-residue chain is Pantothenate synthetase (283 aa).

Position 30–37 (30–37 (MGCLHEGH)) interacts with ATP. Catalysis depends on His37, which acts as the Proton donor. Gln61 provides a ligand contact to (R)-pantoate. Position 61 (Gln61) interacts with beta-alanine. ATP is bound at residue 147–150 (GQKD). Gln153 is a binding site for (R)-pantoate. ATP-binding positions include Val176 and 184-187 (KSSR).

Belongs to the pantothenate synthetase family. As to quaternary structure, homodimer.

It localises to the cytoplasm. It carries out the reaction (R)-pantoate + beta-alanine + ATP = (R)-pantothenate + AMP + diphosphate + H(+). It functions in the pathway cofactor biosynthesis; (R)-pantothenate biosynthesis; (R)-pantothenate from (R)-pantoate and beta-alanine: step 1/1. Catalyzes the condensation of pantoate with beta-alanine in an ATP-dependent reaction via a pantoyl-adenylate intermediate. This is Pantothenate synthetase from Clostridium novyi (strain NT).